The sequence spans 188 residues: Peptidyl-tRNA hydrolase (188 aa).

TRNA is bound at residue Phe14. Residue His19 is the Proton acceptor of the active site. TRNA-binding residues include Tyr64, Asn66, and Asn112.

The protein belongs to the PTH family. Monomer.

It localises to the cytoplasm. It catalyses the reaction an N-acyl-L-alpha-aminoacyl-tRNA + H2O = an N-acyl-L-amino acid + a tRNA + H(+). Hydrolyzes ribosome-free peptidyl-tRNAs (with 1 or more amino acids incorporated), which drop off the ribosome during protein synthesis, or as a result of ribosome stalling. In terms of biological role, catalyzes the release of premature peptidyl moieties from peptidyl-tRNA molecules trapped in stalled 50S ribosomal subunits, and thus maintains levels of free tRNAs and 50S ribosomes. The protein is Peptidyl-tRNA hydrolase of Aster yellows witches'-broom phytoplasma (strain AYWB).